A 1702-amino-acid polypeptide reads, in one-letter code: Immunoglobulin A1 protease autotransporter (1702 aa).

The N-terminal stretch at Met-1–Ala-25 is a signal peptide. One can recognise a Peptidase S6 domain in the interval Ala-26–Thr-332. Residue Ser-288 is part of the active site. The disordered stretch occupies residues Val-991–Arg-1411. Polar residues predominate over residues Thr-997–Glu-1021. Low complexity predominate over residues Thr-1037–Glu-1047. Basic and acidic residues predominate over residues Ser-1049–Gln-1061. Residues Lys-1082 to Ser-1095 are compositionally biased toward polar residues. 2 stretches are compositionally biased toward basic and acidic residues: residues Glu-1104–Ile-1132 and Ala-1150–Glu-1162. Repeat copies occupy residues Ala-1109–Lys-1116 and Ala-1117–Lys-1124. The interval Ala-1109–Lys-1124 is 2 X 8 AA tandem repeats of A-K-V-E-K-E-E-K. 2 stretches are compositionally biased toward polar residues: residues Thr-1163–Ser-1186 and Val-1207–Gln-1218. The span at Pro-1219–Gln-1234 shows a compositional bias: basic and acidic residues. Polar residues-rich tracts occupy residues Glu-1235–Pro-1255, Asn-1263–Thr-1305, and Thr-1316–Asn-1341. The segment covering Glu-1360 to Asp-1378 has biased composition (low complexity). Over residues Arg-1382 to Ser-1392 the composition is skewed to basic residues. The Autotransporter domain maps to Asn-1450–Phe-1702.

The protein localises to the periplasm. The protein resides in the secreted. Its subcellular location is the cell surface. It is found in the cell outer membrane. The enzyme catalyses Cleavage of immunoglobulin A molecules at certain Pro-|-Xaa bonds in the hinge region. No small molecule substrates are known.. In terms of biological role, virulence factor; cleaves host immunoglobulin A producing intact Fc and Fab fragments. This is Immunoglobulin A1 protease autotransporter (iga) from Haemophilus influenzae.